Reading from the N-terminus, the 303-residue chain is MSAVLSPKLIDGKAAAARVLAEVTEDVRTLKAAGIKPALAVVLVGDDPASQVYVRNKVLRAEECGIRSLEHKLPADTAEADLLALIHSLNADYSVHGILVQLPLPAHIDETRVLQAINPLKDVDGFHAENVGGLSQGRDVLTPCTPAGCLRLLQDSCGDLTGKHAVVIGRSNIVGKPMAALLLKAHCSVSVVHSKSANLRELCRQADIVVAAVGKPRLVDADWLKPGAVVIDVGINRIDEGGRSRLVGDVDFDSALTRAAAITPVPGGVGPMTIAFLMKNTLVAARLQHPATGLPLSTLENPA.

NADP(+) is bound by residues 169–171 (GRS), S194, and I235.

It belongs to the tetrahydrofolate dehydrogenase/cyclohydrolase family. Homodimer.

The enzyme catalyses (6R)-5,10-methylene-5,6,7,8-tetrahydrofolate + NADP(+) = (6R)-5,10-methenyltetrahydrofolate + NADPH. It catalyses the reaction (6R)-5,10-methenyltetrahydrofolate + H2O = (6R)-10-formyltetrahydrofolate + H(+). It participates in one-carbon metabolism; tetrahydrofolate interconversion. In terms of biological role, catalyzes the oxidation of 5,10-methylenetetrahydrofolate to 5,10-methenyltetrahydrofolate and then the hydrolysis of 5,10-methenyltetrahydrofolate to 10-formyltetrahydrofolate. The chain is Bifunctional protein FolD 2 from Ectopseudomonas mendocina (strain ymp) (Pseudomonas mendocina).